Reading from the N-terminus, the 124-residue chain is Large ribosomal subunit protein bL12 (124 aa).

This sequence belongs to the bacterial ribosomal protein bL12 family. In terms of assembly, homodimer. Part of the ribosomal stalk of the 50S ribosomal subunit. Forms a multimeric L10(L12)X complex, where L10 forms an elongated spine to which 2 to 4 L12 dimers bind in a sequential fashion. Binds GTP-bound translation factors.

Forms part of the ribosomal stalk which helps the ribosome interact with GTP-bound translation factors. Is thus essential for accurate translation. The polypeptide is Large ribosomal subunit protein bL12 (Cupriavidus taiwanensis (strain DSM 17343 / BCRC 17206 / CCUG 44338 / CIP 107171 / LMG 19424 / R1) (Ralstonia taiwanensis (strain LMG 19424))).